The following is a 211-amino-acid chain: Imidazole glycerol phosphate synthase subunit HisH (211 aa).

Positions 4–211 (TVALLDYGSG…QLLRNWINHI (208 aa)) constitute a Glutamine amidotransferase type-1 domain. Catalysis depends on Cys82, which acts as the Nucleophile. Active-site residues include His192 and Glu194.

As to quaternary structure, heterodimer of HisH and HisF.

The protein resides in the cytoplasm. The enzyme catalyses 5-[(5-phospho-1-deoxy-D-ribulos-1-ylimino)methylamino]-1-(5-phospho-beta-D-ribosyl)imidazole-4-carboxamide + L-glutamine = D-erythro-1-(imidazol-4-yl)glycerol 3-phosphate + 5-amino-1-(5-phospho-beta-D-ribosyl)imidazole-4-carboxamide + L-glutamate + H(+). The catalysed reaction is L-glutamine + H2O = L-glutamate + NH4(+). It functions in the pathway amino-acid biosynthesis; L-histidine biosynthesis; L-histidine from 5-phospho-alpha-D-ribose 1-diphosphate: step 5/9. Functionally, IGPS catalyzes the conversion of PRFAR and glutamine to IGP, AICAR and glutamate. The HisH subunit catalyzes the hydrolysis of glutamine to glutamate and ammonia as part of the synthesis of IGP and AICAR. The resulting ammonia molecule is channeled to the active site of HisF. This Corynebacterium efficiens (strain DSM 44549 / YS-314 / AJ 12310 / JCM 11189 / NBRC 100395) protein is Imidazole glycerol phosphate synthase subunit HisH.